Reading from the N-terminus, the 396-residue chain is Bifunctional enzyme Fae/Hps (396 aa).

The segment at 1 to 161 (MYQIGEALIG…YEKDRGVHAI (161 aa)) is formaldehyde-activating enzyme. His-17 serves as the catalytic Proton donor. 5 residues coordinate substrate: Asp-19, Leu-48, Lys-66, Thr-68, and Gln-83. Residues 162 to 396 (MGYKITRLWD…IDQYRIMTDF (235 aa)) are 3-hexulose-6-phosphate synthase.

This sequence in the N-terminal section; belongs to the formaldehyde-activating enzyme family. In the C-terminal section; belongs to the HPS/KGPDC family. HPS subfamily.

It catalyses the reaction 5,6,7,8-tetrahydromethanopterin + formaldehyde = 5,10-methylenetetrahydromethanopterin + H2O. The enzyme catalyses D-ribulose 5-phosphate + formaldehyde = D-arabino-hex-3-ulose 6-phosphate. The protein operates within carbohydrate biosynthesis; D-ribose 5-phosphate biosynthesis. Catalyzes the condensation of formaldehyde with tetrahydromethanopterin (H(4)MPT) to 5,10-methylenetetrahydromethanopterin. Its function is as follows. Catalyzes the reversible formation of ribulose-5-phosphate and formaldehyde from 3-hexulose-6-phosphate. This chain is Bifunctional enzyme Fae/Hps, found in Methanocella arvoryzae (strain DSM 22066 / NBRC 105507 / MRE50).